The following is a 183-amino-acid chain: Oligoribonuclease (183 aa).

The Exonuclease domain occupies 10–173 (LIWIDLEMTG…ADIRESIAEL (164 aa)). Tyr131 is a catalytic residue.

It belongs to the oligoribonuclease family.

Its subcellular location is the cytoplasm. In terms of biological role, 3'-to-5' exoribonuclease specific for small oligoribonucleotides. The chain is Oligoribonuclease from Idiomarina loihiensis (strain ATCC BAA-735 / DSM 15497 / L2-TR).